The primary structure comprises 474 residues: Nuclear receptor ROR-alpha B (474 aa).

Positions 14–89 form a DNA-binding region, nuclear receptor; the sequence is SIPCKICGDK…VGMSRDAVKF (76 aa). 2 consecutive NR C4-type zinc fingers follow at residues 17-37 and 53-72; these read CKICGDKSSGIHYGVITCEGC and CPRQKSCLIDRTSRNRCQHC. Positions 98–124 are enriched in basic and acidic residues; the sequence is DSLFAEVQKHRQQQQDDKTGDESEKNQ. Positions 98–144 are disordered; the sequence is DSLFAEVQKHRQQQQDDKTGDESEKNQESQAPGEAEPLTPSYALSSS. Residues 223-461 enclose the NR LBD domain; the sequence is DLEHLSENIC…TRFPPLYKEL (239 aa). Positions 450 to 461 are AF-2; sequence VHTRFPPLYKEL.

It belongs to the nuclear hormone receptor family.

It localises to the nucleus. Nuclear receptor that binds DNA as a monomer to ROR response elements (RORE). Required for proper cerebellum development. This is Nuclear receptor ROR-alpha B (rorab) from Danio rerio (Zebrafish).